The primary structure comprises 297 residues: Phosphatidylinositol N-acetylglucosaminyltransferase subunit C (297 aa).

The next 4 membrane-spanning stretches (helical) occupy residues 67 to 87 (VFVVIWWYMDEGLLAPQWLFG), 88 to 108 (TGLASSLVGYVLFDLIDGGDG), 153 to 173 (SVFMLLGHLIFFDYGANAAIV), and 239 to 259 (AFGGLLSISGVGAILFALLLF).

The protein belongs to the PIGC family. Component of the glycosylphosphatidylinositol-N-acetylglucosaminyltransferase (GPI-GnT) complex composed at least by PIGA, PIGC, PIGH, PIGP, PIGQ, PIGY and DPM2. Interacts with PIGQ. Interacts with the heterodimer PIGA:PIGH.

It is found in the endoplasmic reticulum membrane. Its pathway is glycolipid biosynthesis; glycosylphosphatidylinositol-anchor biosynthesis. Functionally, part of the glycosylphosphatidylinositol-N-acetylglucosaminyltransferase (GPI-GnT) complex that catalyzes the transfer of N-acetylglucosamine from UDP-N-acetylglucosamine to phosphatidylinositol and participates in the first step of GPI biosynthesis. The chain is Phosphatidylinositol N-acetylglucosaminyltransferase subunit C from Rattus norvegicus (Rat).